The following is a 200-amino-acid chain: ATP-dependent Clp protease proteolytic subunit (200 aa).

The active-site Nucleophile is Ser103. His128 is an active-site residue.

The protein belongs to the peptidase S14 family. In terms of assembly, fourteen ClpP subunits assemble into 2 heptameric rings which stack back to back to give a disk-like structure with a central cavity, resembling the structure of eukaryotic proteasomes.

Its subcellular location is the cytoplasm. It carries out the reaction Hydrolysis of proteins to small peptides in the presence of ATP and magnesium. alpha-casein is the usual test substrate. In the absence of ATP, only oligopeptides shorter than five residues are hydrolyzed (such as succinyl-Leu-Tyr-|-NHMec, and Leu-Tyr-Leu-|-Tyr-Trp, in which cleavage of the -Tyr-|-Leu- and -Tyr-|-Trp bonds also occurs).. In terms of biological role, cleaves peptides in various proteins in a process that requires ATP hydrolysis. Has a chymotrypsin-like activity. Plays a major role in the degradation of misfolded proteins. The protein is ATP-dependent Clp protease proteolytic subunit of Vibrio parahaemolyticus serotype O3:K6 (strain RIMD 2210633).